The sequence spans 1013 residues: GTPase-activating Rap/Ran-GAP domain-like protein 3 (1013 aa).

A Phosphoserine modification is found at Ser45. The 217-residue stretch at 191–407 folds into the Rap-GAP domain; it reads LLVLEEQEGS…RTLDMLIRSL (217 aa). Ser426 and Ser432 each carry phosphoserine. Residues 489-800 enclose the CNH domain; the sequence is PHEAVCADPW…QLVASRSDIY (312 aa). 2 disordered regions span residues 810-842 and 913-1013; these read VSSG…SLGE and LLGL…IDLK. The segment covering 811 to 821 has biased composition (low complexity); it reads SSGGSSKGASA. A Phosphothreonine modification is found at Thr827. Positions 952–962 are enriched in low complexity; sequence SSSSDRIPSGS. Composition is skewed to polar residues over residues 963–982 and 993–1003; these read LESA…SSDQ and VSGSSPFQLTA.

The protein belongs to the GARNL3 family.

This is GTPase-activating Rap/Ran-GAP domain-like protein 3 (GARNL3) from Homo sapiens (Human).